A 105-amino-acid polypeptide reads, in one-letter code: Small ribosomal subunit protein uS10 (105 aa).

Belongs to the universal ribosomal protein uS10 family. In terms of assembly, part of the 30S ribosomal subunit.

Involved in the binding of tRNA to the ribosomes. The protein is Small ribosomal subunit protein uS10 of Solidesulfovibrio magneticus (strain ATCC 700980 / DSM 13731 / RS-1) (Desulfovibrio magneticus).